The sequence spans 470 residues: Glutamate--tRNA ligase 2 (470 aa).

A 'HIGH' region motif is present at residues 11–21; that stretch reads PSPTGHLHLGG. A 'KMSKS' region motif is present at residues 238–242; that stretch reads KLSKR. ATP is bound at residue K241.

It belongs to the class-I aminoacyl-tRNA synthetase family. Glutamate--tRNA ligase type 1 subfamily. In terms of assembly, monomer.

The protein resides in the cytoplasm. The enzyme catalyses tRNA(Glu) + L-glutamate + ATP = L-glutamyl-tRNA(Glu) + AMP + diphosphate. Catalyzes the attachment of glutamate to tRNA(Glu) in a two-step reaction: glutamate is first activated by ATP to form Glu-AMP and then transferred to the acceptor end of tRNA(Glu). This Ehrlichia ruminantium (strain Welgevonden) protein is Glutamate--tRNA ligase 2.